The sequence spans 1048 residues: Dyslexia-associated protein KIAA0319-like protein (1048 aa).

Topologically, residues 1-29 are cytoplasmic; the sequence is MEKRLGVKPSPASWVLPGYCWQTSVKLPR. A helical transmembrane segment spans residues 30–50; it reads SLYLLYSFFCFSVLWLSTDAD. The MANSC domain occupies 49-127; the sequence is ADESRCQQGK…PFRTDSSNSM (79 aa). Residues 51–928 lie on the Extracellular side of the membrane; the sequence is ESRCQQGKTL…RDGDSNCEWS (878 aa). 2 disordered regions span residues 198-218 and 231-300; these read HGAMQHSKVNHSEEAGALSPT and SFTS…STSA. The segment covering 231–241 has biased composition (polar residues); the sequence is SFTSNHTTQTP. N-linked (GlcNAc...) asparagine glycosylation occurs at Asn246. Low complexity-rich tracts occupy residues 247 to 261 and 287 to 300; these read VSIHPEPSEHSSPVS and ATPTPQASSQSTSA. PKD domains lie at 309–400, 408–497, 503–593, 599–687, and 693–784; these read VVSA…VKPE, VAVV…VNKA, VANA…VQPE, QADA…VKEE, and VAKI…VKPD. Asn394 carries N-linked (GlcNAc...) asparagine glycosylation. Positions 593–623 are disordered; sequence ENNKPPQADAGPDKELTLPVDSTTLDGSKST. A helical transmembrane segment spans residues 929-949; that stretch reads VLYVIIASFVIVVALGILSWT. Over 950-1048 the chain is Cytoplasmic; sequence TICCCKRQKG…KSRSAREEIL (99 aa). Phosphothreonine is present on Thr973. Residue Ser977 is modified to Phosphoserine. The segment at 980–1007 is disordered; it reads LKPTSRAGSKQKGPTLSSSLMHSESELD. Polar residues predominate over residues 985 to 994; that stretch reads RAGSKQKGPT. Phosphoserine is present on residues Ser1008 and Ser1030. Positions 1024 to 1048 are disordered; sequence LYGQNGSVPNGQTPLKSRSAREEIL. Polar residues predominate over residues 1027 to 1039; sequence QNGSVPNGQTPLK. Thr1036 is subject to Phosphothreonine.

Interacts with RTN4R. In terms of processing, N-glycosylated.

Its subcellular location is the cytoplasmic granule membrane. The protein localises to the golgi apparatus membrane. It localises to the golgi apparatus. The protein resides in the trans-Golgi network membrane. It is found in the cell membrane. In terms of biological role, possible role in axon guidance through interaction with RTN4R. Its function is as follows. (Microbial infection) Acts as a receptor for adeno-associated virus and is involved in adeno-associated virus infection through endocytosis system. The sequence is that of Dyslexia-associated protein KIAA0319-like protein from Mus musculus (Mouse).